The chain runs to 100 residues: uncharacterized protein (100 aa).

Transmembrane regions (helical) follow at residues Leu50–Phe70 and Asp75–Val95.

It localises to the membrane. This is an uncharacterized protein from Saccharomyces cerevisiae (strain ATCC 204508 / S288c) (Baker's yeast).